A 150-amino-acid polypeptide reads, in one-letter code: Actin-depolymerizing factor 3 (150 aa).

Residues 7–150 form the ADF-H domain; that stretch reads GVAVSEECKA…TLDVLKDHTS (144 aa).

Belongs to the actin-binding proteins ADF family.

In terms of biological role, actin-depolymerizing protein. Severs actin filaments (F-actin) and binds to actin monomers. This is Actin-depolymerizing factor 3 (ADF3) from Oryza sativa subsp. japonica (Rice).